The sequence spans 404 residues: Cysteine desulfurase IscS (404 aa).

Pyridoxal 5'-phosphate-binding positions include 85–86 (GT), Asn165, Gln193, 213–215 (SGH), and Thr251. Cys338 serves as the catalytic Cysteine persulfide intermediate. A [2Fe-2S] cluster-binding site is contributed by Cys338.

The protein belongs to the class-V pyridoxal-phosphate-dependent aminotransferase family. NifS/IscS subfamily. In terms of assembly, homodimer. Forms a heterotetramer with IscU, interacts with other sulfur acceptors. It depends on pyridoxal 5'-phosphate as a cofactor.

It localises to the cytoplasm. The catalysed reaction is (sulfur carrier)-H + L-cysteine = (sulfur carrier)-SH + L-alanine. Its pathway is cofactor biosynthesis; iron-sulfur cluster biosynthesis. Master enzyme that delivers sulfur to a number of partners involved in Fe-S cluster assembly, tRNA modification or cofactor biosynthesis. Catalyzes the removal of elemental sulfur atoms from cysteine to produce alanine. Functions as a sulfur delivery protein for Fe-S cluster synthesis onto IscU, an Fe-S scaffold assembly protein, as well as other S acceptor proteins. The protein is Cysteine desulfurase IscS of Methanosarcina thermophila.